A 333-amino-acid polypeptide reads, in one-letter code: 4-hydroxy-3-methylbut-2-enyl diphosphate reductase (333 aa).

Cys34 provides a ligand contact to [4Fe-4S] cluster. Residues His63 and His96 each coordinate (2E)-4-hydroxy-3-methylbut-2-enyl diphosphate. The dimethylallyl diphosphate site is built by His63 and His96. Residues His63 and His96 each coordinate isopentenyl diphosphate. Cys118 contributes to the [4Fe-4S] cluster binding site. Residue His146 participates in (2E)-4-hydroxy-3-methylbut-2-enyl diphosphate binding. Position 146 (His146) interacts with dimethylallyl diphosphate. Isopentenyl diphosphate is bound at residue His146. Residue Glu148 is the Proton donor of the active site. Residue Thr186 participates in (2E)-4-hydroxy-3-methylbut-2-enyl diphosphate binding. A [4Fe-4S] cluster-binding site is contributed by Cys216. Ser244, Ser245, Asn246, and Ser289 together coordinate (2E)-4-hydroxy-3-methylbut-2-enyl diphosphate. Residues Ser244, Ser245, Asn246, and Ser289 each contribute to the dimethylallyl diphosphate site. Isopentenyl diphosphate is bound by residues Ser244, Ser245, Asn246, and Ser289.

The protein belongs to the IspH family. [4Fe-4S] cluster serves as cofactor.

The catalysed reaction is isopentenyl diphosphate + 2 oxidized [2Fe-2S]-[ferredoxin] + H2O = (2E)-4-hydroxy-3-methylbut-2-enyl diphosphate + 2 reduced [2Fe-2S]-[ferredoxin] + 2 H(+). The enzyme catalyses dimethylallyl diphosphate + 2 oxidized [2Fe-2S]-[ferredoxin] + H2O = (2E)-4-hydroxy-3-methylbut-2-enyl diphosphate + 2 reduced [2Fe-2S]-[ferredoxin] + 2 H(+). Its pathway is isoprenoid biosynthesis; dimethylallyl diphosphate biosynthesis; dimethylallyl diphosphate from (2E)-4-hydroxy-3-methylbutenyl diphosphate: step 1/1. The protein operates within isoprenoid biosynthesis; isopentenyl diphosphate biosynthesis via DXP pathway; isopentenyl diphosphate from 1-deoxy-D-xylulose 5-phosphate: step 6/6. In terms of biological role, catalyzes the conversion of 1-hydroxy-2-methyl-2-(E)-butenyl 4-diphosphate (HMBPP) into a mixture of isopentenyl diphosphate (IPP) and dimethylallyl diphosphate (DMAPP). Acts in the terminal step of the DOXP/MEP pathway for isoprenoid precursor biosynthesis. The protein is 4-hydroxy-3-methylbut-2-enyl diphosphate reductase of Mycobacterium sp. (strain JLS).